Here is a 335-residue protein sequence, read N- to C-terminus: Glycerol-3-phosphate dehydrogenase [NAD(P)+] (335 aa).

NADPH contacts are provided by S15, Y16, H36, and K110. Sn-glycerol 3-phosphate contacts are provided by K110, G139, and T141. Residue A143 coordinates NADPH. K195, D248, S258, R259, and N260 together coordinate sn-glycerol 3-phosphate. K195 functions as the Proton acceptor in the catalytic mechanism. An NADPH-binding site is contributed by R259. Residues V283 and E285 each contribute to the NADPH site.

This sequence belongs to the NAD-dependent glycerol-3-phosphate dehydrogenase family.

It localises to the cytoplasm. It carries out the reaction sn-glycerol 3-phosphate + NAD(+) = dihydroxyacetone phosphate + NADH + H(+). The catalysed reaction is sn-glycerol 3-phosphate + NADP(+) = dihydroxyacetone phosphate + NADPH + H(+). Its pathway is membrane lipid metabolism; glycerophospholipid metabolism. Its function is as follows. Catalyzes the reduction of the glycolytic intermediate dihydroxyacetone phosphate (DHAP) to sn-glycerol 3-phosphate (G3P), the key precursor for phospholipid synthesis. This is Glycerol-3-phosphate dehydrogenase [NAD(P)+] from Haemophilus influenzae (strain ATCC 51907 / DSM 11121 / KW20 / Rd).